A 158-amino-acid polypeptide reads, in one-letter code: Cyclic pyranopterin monophosphate synthase (158 aa).

Substrate contacts are provided by residues 76 to 78 (MCH) and 114 to 115 (ME). D129 is a catalytic residue.

Belongs to the MoaC family. In terms of assembly, homohexamer; trimer of dimers.

It carries out the reaction (8S)-3',8-cyclo-7,8-dihydroguanosine 5'-triphosphate = cyclic pyranopterin phosphate + diphosphate. Its pathway is cofactor biosynthesis; molybdopterin biosynthesis. Its function is as follows. Catalyzes the conversion of (8S)-3',8-cyclo-7,8-dihydroguanosine 5'-triphosphate to cyclic pyranopterin monophosphate (cPMP). This is Cyclic pyranopterin monophosphate synthase from Clostridium perfringens (strain 13 / Type A).